Consider the following 468-residue polypeptide: Acetyl-CoA decarbonylase/synthase complex subunit gamma (468 aa).

One can recognise a 4Fe-4S domain in the interval Met1–Asp60. Positions 18, 21, 26, and 43 each coordinate [4Fe-4S] cluster.

As to quaternary structure, heterodimer of delta and gamma chains. The ACDS complex is made up of alpha, epsilon, beta, gamma and delta chains with a probable stoichiometry of (alpha(2)epsilon(2))(4)-beta(8)-(gamma(1)delta(1))(8). Corrinoid serves as cofactor. [4Fe-4S] cluster is required as a cofactor.

The enzyme catalyses 5,6,7,8-tetrahydrosarcinapterin + methyl-Co(III)-[corrinoid Fe-S protein] = 5-methyltetrahydrosarcinapterin + Co(I)-[corrinoid Fe-S protein] + H(+). Its pathway is one-carbon metabolism; methanogenesis from acetate. Functionally, part of a complex that catalyzes the reversible cleavage of acetyl-CoA, allowing growth on acetate as sole source of carbon and energy. The polypeptide is Acetyl-CoA decarbonylase/synthase complex subunit gamma (Methanosarcina acetivorans (strain ATCC 35395 / DSM 2834 / JCM 12185 / C2A)).